The sequence spans 77 residues: uncharacterized protein (77 aa).

A helical membrane pass occupies residues 13–33 (VPVIRLSVFLHFFFVFPFCLL).

The protein localises to the membrane. This is an uncharacterized protein from Saccharomyces cerevisiae (strain ATCC 204508 / S288c) (Baker's yeast).